The chain runs to 206 residues: Pyridoxal 5'-phosphate synthase subunit PdxT (206 aa).

L-glutamine is bound at residue 59–61 (GES). Cysteine 91 (nucleophile) is an active-site residue. Residues arginine 123 and 151–152 (IR) each bind L-glutamine. Active-site charge relay system residues include histidine 187 and glutamate 189.

This sequence belongs to the glutaminase PdxT/SNO family. As to quaternary structure, in the presence of PdxS, forms a dodecamer of heterodimers. Only shows activity in the heterodimer.

The enzyme catalyses aldehydo-D-ribose 5-phosphate + D-glyceraldehyde 3-phosphate + L-glutamine = pyridoxal 5'-phosphate + L-glutamate + phosphate + 3 H2O + H(+). It carries out the reaction L-glutamine + H2O = L-glutamate + NH4(+). It functions in the pathway cofactor biosynthesis; pyridoxal 5'-phosphate biosynthesis. In terms of biological role, catalyzes the hydrolysis of glutamine to glutamate and ammonia as part of the biosynthesis of pyridoxal 5'-phosphate. The resulting ammonia molecule is channeled to the active site of PdxS. The polypeptide is Pyridoxal 5'-phosphate synthase subunit PdxT (Mycobacterium sp. (strain JLS)).